Consider the following 275-residue polypeptide: Formamidopyrimidine-DNA glycosylase (275 aa).

Pro2 serves as the catalytic Schiff-base intermediate with DNA. Glu3 acts as the Proton donor in catalysis. The active-site Proton donor; for beta-elimination activity is Lys58. His93, Arg111, and Arg156 together coordinate DNA. An FPG-type zinc finger spans residues 241–275 (FVYDRAGLPCRVCGTPIRQIVQGQRSTYFCPTCQR). Catalysis depends on Arg265, which acts as the Proton donor; for delta-elimination activity.

The protein belongs to the FPG family. As to quaternary structure, monomer. Requires Zn(2+) as cofactor.

It carries out the reaction Hydrolysis of DNA containing ring-opened 7-methylguanine residues, releasing 2,6-diamino-4-hydroxy-5-(N-methyl)formamidopyrimidine.. The catalysed reaction is 2'-deoxyribonucleotide-(2'-deoxyribose 5'-phosphate)-2'-deoxyribonucleotide-DNA = a 3'-end 2'-deoxyribonucleotide-(2,3-dehydro-2,3-deoxyribose 5'-phosphate)-DNA + a 5'-end 5'-phospho-2'-deoxyribonucleoside-DNA + H(+). Functionally, involved in base excision repair of DNA damaged by oxidation or by mutagenic agents. Acts as a DNA glycosylase that recognizes and removes damaged bases. Has a preference for oxidized purines, such as 7,8-dihydro-8-oxoguanine (8-oxoG). Has AP (apurinic/apyrimidinic) lyase activity and introduces nicks in the DNA strand. Cleaves the DNA backbone by beta-delta elimination to generate a single-strand break at the site of the removed base with both 3'- and 5'-phosphates. The chain is Formamidopyrimidine-DNA glycosylase from Burkholderia ambifaria (strain MC40-6).